The chain runs to 376 residues: Succinyl-diaminopimelate desuccinylase (376 aa).

Histidine 67 lines the Zn(2+) pocket. Aspartate 69 is a catalytic residue. Aspartate 100 lines the Zn(2+) pocket. Catalysis depends on glutamate 134, which acts as the Proton acceptor. Residues glutamate 135, glutamate 163, and histidine 349 each contribute to the Zn(2+) site.

This sequence belongs to the peptidase M20A family. DapE subfamily. In terms of assembly, homodimer. Requires Zn(2+) as cofactor. It depends on Co(2+) as a cofactor.

The catalysed reaction is N-succinyl-(2S,6S)-2,6-diaminopimelate + H2O = (2S,6S)-2,6-diaminopimelate + succinate. Its pathway is amino-acid biosynthesis; L-lysine biosynthesis via DAP pathway; LL-2,6-diaminopimelate from (S)-tetrahydrodipicolinate (succinylase route): step 3/3. Functionally, catalyzes the hydrolysis of N-succinyl-L,L-diaminopimelic acid (SDAP), forming succinate and LL-2,6-diaminopimelate (DAP), an intermediate involved in the bacterial biosynthesis of lysine and meso-diaminopimelic acid, an essential component of bacterial cell walls. In Pseudoalteromonas translucida (strain TAC 125), this protein is Succinyl-diaminopimelate desuccinylase.